We begin with the raw amino-acid sequence, 162 residues long: Peptide deformylase-like (162 aa).

It belongs to the polypeptide deformylase family.

The protein is Peptide deformylase-like of Staphylococcus epidermidis (strain ATCC 35984 / DSM 28319 / BCRC 17069 / CCUG 31568 / BM 3577 / RP62A).